Here is a 573-residue protein sequence, read N- to C-terminus: Lauric acid 10-hydroxylase (573 aa).

Helical transmembrane passes span 3 to 23 (YVNILLGLFFTWFLVNGLMSL) and 298 to 318 (LFPTPFLPFIIICPFLYLLIF). Residue cysteine 516 coordinates heme.

It belongs to the cytochrome P450 family. Heme serves as cofactor. As to expression, mostly expressed in flowers and leaves and, at low levels, in roots and stems.

It localises to the endoplasmic reticulum membrane. It catalyses the reaction an omega-methyl-medium-chain fatty acid + reduced [NADPH--hemoprotein reductase] + O2 = an omega-hydroxy-medium-chain fatty acid + oxidized [NADPH--hemoprotein reductase] + H2O + H(+). The enzyme catalyses decanoate + reduced [NADPH--hemoprotein reductase] + O2 = 10-hydroxydecanoate + oxidized [NADPH--hemoprotein reductase] + H2O + H(+). It carries out the reaction dodecanoate + reduced [NADPH--hemoprotein reductase] + O2 = 12-hydroxydodecanoate + oxidized [NADPH--hemoprotein reductase] + H2O + H(+). It participates in lipid metabolism; fatty acid metabolism. In terms of biological role, cytochrome P450 hydroxylase catalyzing the conversion of decanoate (capric acid) and dodecanoate (lauric acid) to their corresponding omega-hydroxy metabolites, 10-hydroxydecanoate and 12-hydroxydodecanoate, respectively; these hydroxylated components affect plant growth, including reducing root elongation. The chain is Lauric acid 10-hydroxylase from Petunia hybrida (Petunia).